The chain runs to 634 residues: ATP-dependent zinc metalloprotease FtsH (634 aa).

Topologically, residues 1–5 are cytoplasmic; that stretch reads MNALK. A helical transmembrane segment spans residues 6-26; it reads NFFIWAIIIGAAIVAFNLFEG. At 27–100 the chain is on the periplasmic side; the sequence is KREFTTKVSL…VANPEPPGGW (74 aa). Residues 101–121 form a helical membrane-spanning segment; sequence LVNVFLSWLPILFFIGIWIFL. The Cytoplasmic segment spans residues 122 to 634; it reads LRQMSGGGNV…KSEEVKEEVV (513 aa). Residue 195–202 coordinates ATP; that stretch reads GEPGVGKT. Residue H418 coordinates Zn(2+). E419 is a catalytic residue. 2 residues coordinate Zn(2+): H422 and D496. A disordered region spans residues 615 to 634; sequence DRKSEENKELKSEEVKEEVV.

This sequence in the central section; belongs to the AAA ATPase family. The protein in the C-terminal section; belongs to the peptidase M41 family. As to quaternary structure, the isolated protease domain (residues 405-634) forms a stable hexamer. Zn(2+) serves as cofactor.

It is found in the cell inner membrane. Functionally, acts as a processive, ATP-dependent zinc metallopeptidase for both cytoplasmic and membrane proteins. Plays a role in the quality control of integral membrane proteins. The sequence is that of ATP-dependent zinc metalloprotease FtsH from Aquifex aeolicus (strain VF5).